Here is a 255-residue protein sequence, read N- to C-terminus: F-box/SPRY domain-containing protein 1 (255 aa).

Residues 3–51 (DPVAALCNFNVLEVIFSYLDLNDLSRCSQVCRSWHHFLNDENSDVWRWH) form the F-box domain. The B30.2/SPRY domain occupies 61 to 253 (MKSDLLTSVS…VSMVYLGTPL (193 aa)).

This sequence belongs to the FBXO45/Fsn family. As to quaternary structure, component of an E3 ubiquitin ligase complex composed of hiw and Fsn.

It is found in the synapse. Its pathway is protein modification; protein ubiquitination. Required in the presynaptic motoneuron to down-regulate the levels of wnd and restrain synaptic terminal growth at the neuromuscular junction (NMJ). This chain is F-box/SPRY domain-containing protein 1, found in Drosophila willistoni (Fruit fly).